Reading from the N-terminus, the 497-residue chain is Serine/threonine-protein kinase cst-1 (497 aa).

Residues 1–27 (MPPSTDSSRRNSEEGSSDGFKLDSSAL) form a disordered region. In terms of domain architecture, Protein kinase spans 35–286 (FDIVGKLGEG…ALRLCEHTFI (252 aa)). ATP is bound by residues 41–49 (LGEGSYGSV) and K64. The active-site Proton acceptor is D154. The tract at residues 367-416 (KSAYIPGSSKNGNSPRVQPPGHTASASDPSKNQPFAQDGTGPNFQLGTSE) is disordered. Polar residues predominate over residues 390–416 (ASASDPSKNQPFAQDGTGPNFQLGTSE). The region spanning 446–493 (FEFLRNITLDELIRRKESLDSEMEEEIRELQRRYKTKRQPILDVIEIK) is the SARAH domain. Residues 450–486 (RNITLDELIRRKESLDSEMEEEIRELQRRYKTKRQPI) adopt a coiled-coil conformation.

It belongs to the protein kinase superfamily. STE Ser/Thr protein kinase family. STE20 subfamily. As to quaternary structure, interacts with rsf-1 (via SARAH domain); the interaction is required for the phosphorylation of cst-1. Mg(2+) is required as a cofactor. Proteolytically cleaved by caspase-3 during apoptosis which results in kinase activation. Post-translationally, phosphorylated. In terms of tissue distribution, widely expressed in epidermal cells.

The enzyme catalyses L-seryl-[protein] + ATP = O-phospho-L-seryl-[protein] + ADP + H(+). It carries out the reaction L-threonyl-[protein] + ATP = O-phospho-L-threonyl-[protein] + ADP + H(+). Functionally, serine/threonine-protein kinase which extends lifespan and delays tissue aging, probably by activating daf-16. This chain is Serine/threonine-protein kinase cst-1, found in Caenorhabditis elegans.